The sequence spans 652 residues: Carboxypeptidase Z (652 aa).

The N-terminal stretch at 1–18 (MPPPLPLLLLTVLVVAAA) is a signal peptide. In terms of domain architecture, FZ spans 27–160 (NPAGECHRPP…TREDEGCYDP (134 aa)). 5 disulfides stabilise this stretch: Cys43-Cys109, Cys51-Cys102, Cys93-Cys129, Cys118-Cys157, and Cys122-Cys146. The region spanning 186–502 (SHHSYAQMVR…ESLLNFVETV (317 aa)) is the Peptidase M14 domain. The Zn(2+) site is built by His248 and Glu251. Asn281 carries N-linked (GlcNAc...) asparagine glycosylation. His380 serves as a coordination point for Zn(2+). Residue Glu472 is the Proton donor/acceptor of the active site. A disordered region spans residues 595–629 (LRRTGPHDPLGGASSLGEATEPDPLRARRQPSADG).

The protein belongs to the peptidase M14 family. It depends on Zn(2+) as a cofactor. In placenta, it is present within invasive trophoblasts and in the surrounding extracellular space. Also present in amnion cells, but is not readily apparent in the extracellular matrix of this cell type. Present in normal pituitary gland and neoplastic pituitary gland (especially POMC-, GH- and PRL-producing adenomas) (at protein level). Widely expressed.

It localises to the secreted. The protein resides in the extracellular space. Its subcellular location is the extracellular matrix. With respect to regulation, inhibited by 2-mercaptomethyl-3-guanidinoethylthiopropanoic acid (MGTA) and guanidinoethylmercaptosuccinic acid (GEMSA). Inhibited by chelating agents such as EDTA and EGTA. Its function is as follows. Cleaves substrates with C-terminal arginine residues. Probably modulates the Wnt signaling pathway, by cleaving some undefined protein. May play a role in cleavage during prohormone processing. The chain is Carboxypeptidase Z (CPZ) from Homo sapiens (Human).